Here is a 118-residue protein sequence, read N- to C-terminus: MPRAKTGIVRRRRHKKVLKRAKGFWGSRSKQYRNAFQTLLNAATYEYRDRRNKKRDFRRLWIQRINAGARLHGMNYSTFINGLKRANIDLNRKVLADIAAREPEAFKALVDASRNARQ.

This sequence belongs to the bacterial ribosomal protein bL20 family. In terms of assembly, part of the 50S ribosomal subunit. Contacts proteins L13 and L21.

Functionally, binds directly to 23S rRNA, probably serving to organize its structure. In Deinococcus radiodurans (strain ATCC 13939 / DSM 20539 / JCM 16871 / CCUG 27074 / LMG 4051 / NBRC 15346 / NCIMB 9279 / VKM B-1422 / R1), this protein is Large ribosomal subunit protein bL20 (rplT).